A 201-amino-acid chain; its full sequence is Dimethylsulfoniopropionate lyase DddQ (201 aa).

Positions 130, 134, 136, and 169 each coordinate a divalent metal cation.

This sequence belongs to the non-heme iron-dependent dioxygenase family. In terms of assembly, homodimer. A divalent metal cation serves as cofactor.

The enzyme catalyses S,S-dimethyl-beta-propiothetin = acrylate + dimethyl sulfide + H(+). In terms of biological role, may act as a dimethylsulfoniopropionate (DMSP) in vitro, releasing dimethyl sulfide (DMS). DMS is the principal form by which sulfur is transported from oceans to the atmosphere. The real activity of the protein is however subject to debate and it is unclear whether it constitutes a real dimethylsulfoniopropionate lyase in vivo. The polypeptide is Dimethylsulfoniopropionate lyase DddQ (Ruegeria pomeroyi (strain ATCC 700808 / DSM 15171 / DSS-3) (Silicibacter pomeroyi)).